Reading from the N-terminus, the 109-residue chain is uncharacterized protein (109 aa).

This sequence to M.jannaschii MJ1244 and MJ1245 and M.thermoautotrophicum MTH1110.

This is an uncharacterized protein from Methanococcus maripaludis (Methanococcus deltae).